The primary structure comprises 208 residues: Small ribosomal subunit protein uS4 (208 aa).

The 64-residue stretch at 98–161 (QRLDNVVYRM…KTNSQILRAI (64 aa)) folds into the S4 RNA-binding domain.

The protein belongs to the universal ribosomal protein uS4 family. Part of the 30S ribosomal subunit. Contacts protein S5. The interaction surface between S4 and S5 is involved in control of translational fidelity.

Its function is as follows. One of the primary rRNA binding proteins, it binds directly to 16S rRNA where it nucleates assembly of the body of the 30S subunit. With S5 and S12 plays an important role in translational accuracy. This chain is Small ribosomal subunit protein uS4, found in Sulfurovum sp. (strain NBC37-1).